A 293-amino-acid polypeptide reads, in one-letter code: Probable tRNA-splicing endonuclease subunit Sen2 (293 aa).

Active-site residues include Y157, H165, and K204. A helical transmembrane segment spans residues 267–287 (VVFNHWGVILGFTVLSGLLVY).

This sequence belongs to the tRNA-intron endonuclease family. In terms of assembly, tRNA splicing endonuclease is a heterotetramer composed of SEN2, SEN15, SEN34/LENG5 and SEN54.

It localises to the nucleus. Its subcellular location is the membrane. The catalysed reaction is pretRNA = a 3'-half-tRNA molecule with a 5'-OH end + a 5'-half-tRNA molecule with a 2',3'-cyclic phosphate end + an intron with a 2',3'-cyclic phosphate and a 5'-hydroxyl terminus.. In terms of biological role, constitutes one of the two catalytic subunit of the tRNA-splicing endonuclease complex, a complex responsible for identification and cleavage of the splice sites in pre-tRNA. It cleaves pre-tRNA at the 5'- and 3'-splice sites to release the intron. The products are an intron and two tRNA half-molecules bearing 2',3'-cyclic phosphate and 5'-OH termini. There are no conserved sequences at the splice sites, but the intron is invariably located at the same site in the gene, placing the splice sites an invariant distance from the constant structural features of the tRNA body. Probably carries the active site for 5'-splice site cleavage. This chain is Probable tRNA-splicing endonuclease subunit Sen2, found in Oryza sativa subsp. japonica (Rice).